The following is a 347-amino-acid chain: Protein RecA (347 aa).

Residue 65–72 coordinates ATP; it reads GPESSGKT. Positions 327–336 are enriched in basic and acidic residues; sequence KFEPTELSRE. Positions 327 to 347 are disordered; it reads KFEPTELSREEGDEDTLEDAM. Residues 337-347 show a composition bias toward acidic residues; sequence EGDEDTLEDAM.

It belongs to the RecA family.

It is found in the cytoplasm. In terms of biological role, can catalyze the hydrolysis of ATP in the presence of single-stranded DNA, the ATP-dependent uptake of single-stranded DNA by duplex DNA, and the ATP-dependent hybridization of homologous single-stranded DNAs. It interacts with LexA causing its activation and leading to its autocatalytic cleavage. The chain is Protein RecA from Xylella fastidiosa (strain M23).